The primary structure comprises 190 residues: Double zinc ribbon protein MJ0416 (190 aa).

Residues 134-183 (CPNCNNYISDSWKYCAHCGAKLKEEEEEVLRCPNCKRPVQPEWIVCPYCG) form a DZANK-type zinc finger.

In Methanocaldococcus jannaschii (strain ATCC 43067 / DSM 2661 / JAL-1 / JCM 10045 / NBRC 100440) (Methanococcus jannaschii), this protein is Double zinc ribbon protein MJ0416.